A 400-amino-acid chain; its full sequence is MATLLLLLGVLVVSPDALGSTTAVQTPTSGEPLVSTSEPLSSKMYTTSITSDPKADSTGDQTSALPPSTSINEGSPLWTSIGASTGSPLPEPTTYQEVSIKMSSVPQETPHATSHPAVPITANSLGSHTVTGGTITTNSPETSSRTSGAPVTTAASSLETSRGTSGPPLTMATVSLETSKGTSGPPVTMATDSLETSTGTTGPPVTMTTGSLEPSSGASGPQVSSVKLSTMMSPTTSTNASTVPFRNPDENSRGMLPVAVLVALLAVIVLVALLLLWRRRQKRRTGALVLSRGGKRNGVVDAWAGPAQVPEEGAVTVTVGGSGGDKGSGFPDGEGSSRRPTLTTFFGRRKSRQGSLAMEELKSGSGPSLKGEEEPLVASEDGAVDAPAPDEPEGGDGAAP.

The first 19 residues, 1 to 19 (MATLLLLLGVLVVSPDALG), serve as a signal peptide directing secretion. The Extracellular segment spans residues 20-253 (STTAVQTPTS…PFRNPDENSR (234 aa)). Thr21, Thr22, Thr26, and Thr28 each carry an O-linked (GalNAc...) threonine glycan. Polar residues-rich tracts occupy residues 21–51 (TTAV…SITS) and 58–112 (TGDQ…TPHA). A disordered region spans residues 21-224 (TTAVQTPTSG…SSGASGPQVS (204 aa)). 2 O-linked (GalNAc...) serine glycosylation sites follow: Ser29 and Ser35. The O-linked (GalNAc...) threonine glycan is linked to Thr36. Residues Ser37, Ser41, and Ser42 are each glycosylated (O-linked (GalNAc...) serine). Residues Thr46 and Thr47 are each glycosylated (O-linked (GalNAc...) threonine). Ser48 is a glycosylation site (O-linked (GalNAc...) serine). 3 O-linked (GalNAc...) threonine glycosylation sites follow: Thr50, Thr58, and Thr69. 2 O-linked (GalNAc...) serine glycosylation sites follow: Ser99 and Ser103. Residues Thr109 and Thr113 are each glycosylated (O-linked (GalNAc...) threonine). A glycan (O-linked (GalNAc...) serine) is linked at Ser114. 2 stretches are compositionally biased toward polar residues: residues 121–164 (TANS…SRGT) and 172–182 (ATVSLETSKGT). 4 O-linked (GalNAc...) threonine glycosylation sites follow: Thr136, Thr137, Thr173, and Thr178. The span at 196–211 (TSTGTTGPPVTMTTGS) shows a compositional bias: low complexity. The segment covering 212 to 224 (LEPSSGASGPQVS) has biased composition (polar residues). N-linked (GlcNAc...) asparagine glycosylation is present at Asn239. The chain crosses the membrane as a helical span at residues 254-276 (GMLPVAVLVALLAVIVLVALLLL). Over 277–400 (WRRRQKRRTG…EPEGGDGAAP (124 aa)) the chain is Cytoplasmic. The required for interaction with EZR, MSN and RDX and for co-localization to microvilli stretch occupies residues 278-308 (RRRQKRRTGALVLSRGGKRNGVVDAWAGPAQ). A Nuclear localization signal motif is present at residues 282–296 (KRRTGALVLSRGGKR). Ser291 is subject to Phosphoserine. The segment covering 320 to 332 (GGSGGDKGSGFPD) has biased composition (gly residues). A disordered region spans residues 320-400 (GGSGGDKGSG…EPEGGDGAAP (81 aa)). Ser336 carries the phosphoserine modification. Thr341 bears the Phosphothreonine mark. Ser351 bears the Phosphoserine mark. The residue at position 355 (Ser355) is a Phosphoserine; by PKC/PRKCQ. Phosphoserine is present on residues Ser368 and Ser379.

As to quaternary structure, interacts with SIGLEC1. In terms of assembly, monomer. Interacts with CTNNB1. Interacts with RDX (via FERM domain), EZR and MSN. Post-translationally, glycosylated; has a high content of sialic acid and O-linked carbohydrate structures. In terms of processing, phosphorylation at Ser-355 is regulated by chemokines, requires its association with ERM proteins (EZR, RDX and MSN) and is essential for its function in the regulation of T-cell trafficking to lymph nodes. Has a high content of sialic acid and O-linked carbohydrate structures. Post-translationally, cleavage by CTSG releases its extracellular domain and triggers its intramembrane proteolysis by gamma-secretase releasing the CD43 cytoplasmic tail chain (CD43-ct) which translocates to the nucleus. In terms of processing, sumoylated. As to expression, cell surface of thymocytes, T-lymphocytes, neutrophils, plasma cells and myelomas.

It is found in the membrane. The protein localises to the cell projection. Its subcellular location is the microvillus. It localises to the uropodium. The protein resides in the nucleus. It is found in the PML body. Functionally, predominant cell surface sialoprotein of leukocytes which regulates multiple T-cell functions, including T-cell activation, proliferation, differentiation, trafficking and migration. Positively regulates T-cell trafficking to lymph-nodes via its association with ERM proteins (EZR, RDX and MSN). Negatively regulates Th2 cell differentiation and predisposes the differentiation of T-cells towards a Th1 lineage commitment. Promotes the expression of IFN-gamma by T-cells during T-cell receptor (TCR) activation of naive cells and induces the expression of IFN-gamma by CD4(+) T-cells and to a lesser extent by CD8(+) T-cells. Plays a role in preparing T-cells for cytokine sensing and differentiation into effector cells by inducing the expression of cytokine receptors IFNGR and IL4R, promoting IFNGR and IL4R signaling and by mediating the clustering of IFNGR with TCR. Acts as a major E-selectin ligand responsible for Th17 cell rolling on activated vasculature and recruitment during inflammation. Mediates Th17 cells, but not Th1 cells, adhesion to E-selectin. Acts as a T-cell counter-receptor for SIGLEC1. Protects cells from apoptotic signals, promoting cell survival. This is Leukosialin (SPN) from Homo sapiens (Human).